The following is a 246-amino-acid chain: Protein PHLOEM PROTEIN 2-LIKE A1 (246 aa).

In terms of tissue distribution, vascular tissues, specifically in phloem companion cell-sieve element complexes.

The polypeptide is Protein PHLOEM PROTEIN 2-LIKE A1 (PP2A1) (Arabidopsis thaliana (Mouse-ear cress)).